A 304-amino-acid chain; its full sequence is tRNA uridine(34) hydroxylase (304 aa).

The Rhodanese domain occupies 124-219 (QDEETLLIDT…YLETIPKEES (96 aa)). The active-site Cysteine persulfide intermediate is C179.

This sequence belongs to the TrhO family.

The enzyme catalyses uridine(34) in tRNA + AH2 + O2 = 5-hydroxyuridine(34) in tRNA + A + H2O. Catalyzes oxygen-dependent 5-hydroxyuridine (ho5U) modification at position 34 in tRNAs. The chain is tRNA uridine(34) hydroxylase from Bartonella quintana (strain Toulouse) (Rochalimaea quintana).